Reading from the N-terminus, the 266-residue chain is Small ribosomal subunit protein uS2 (266 aa).

The segment at 229–254 (RTSDKEADTTTEEVAQEEVTDTKADE) is disordered. The span at 237 to 247 (TTTEEVAQEEV) shows a compositional bias: acidic residues.

Belongs to the universal ribosomal protein uS2 family.

This Flavobacterium psychrophilum (strain ATCC 49511 / DSM 21280 / CIP 103535 / JIP02/86) protein is Small ribosomal subunit protein uS2.